A 206-amino-acid polypeptide reads, in one-letter code: Small ribosomal subunit protein uS4c (206 aa).

Basic residues-rich tracts occupy residues 1 to 13 and 25 to 34; these read MSRYRGPKLRITR and QSKKKGRPGQ. Positions 1 to 50 are disordered; it reads MSRYRGPKLRITRRLGALPGLTQKQSKKKGRPGQHGKSNEADNSKKTTEY. Residues 37–50 are compositionally biased toward basic and acidic residues; it reads KSNEADNSKKTTEY. Positions 95 to 157 constitute an S4 RNA-binding domain; sequence MRLDTICFTL…ATSKNLVEGN (63 aa).

This sequence belongs to the universal ribosomal protein uS4 family. In terms of assembly, part of the 30S ribosomal subunit. Contacts protein S5. The interaction surface between S4 and S5 is involved in control of translational fidelity.

The protein localises to the plastid. The protein resides in the chloroplast. One of the primary rRNA binding proteins, it binds directly to 16S rRNA where it nucleates assembly of the body of the 30S subunit. Functionally, with S5 and S12 plays an important role in translational accuracy. The protein is Small ribosomal subunit protein uS4c (rps4) of Trieres chinensis (Marine centric diatom).